Consider the following 105-residue polypeptide: Small ribosomal subunit protein uS10 (105 aa).

Belongs to the universal ribosomal protein uS10 family. In terms of assembly, part of the 30S ribosomal subunit.

Functionally, involved in the binding of tRNA to the ribosomes. The chain is Small ribosomal subunit protein uS10 from Acidobacterium capsulatum (strain ATCC 51196 / DSM 11244 / BCRC 80197 / JCM 7670 / NBRC 15755 / NCIMB 13165 / 161).